Consider the following 401-residue polypeptide: Acetate kinase (401 aa).

N7 provides a ligand contact to Mg(2+). K14 is an ATP binding site. R90 contributes to the substrate binding site. The active-site Proton donor/acceptor is the D147. ATP contacts are provided by residues 207–211 (HMGNG), 282–284 (DMR), and 331–335 (GIGEN). E385 is a Mg(2+) binding site.

This sequence belongs to the acetokinase family. In terms of assembly, homodimer. It depends on Mg(2+) as a cofactor. The cofactor is Mn(2+).

The protein resides in the cytoplasm. It catalyses the reaction acetate + ATP = acetyl phosphate + ADP. It functions in the pathway metabolic intermediate biosynthesis; acetyl-CoA biosynthesis; acetyl-CoA from acetate: step 1/2. Functionally, catalyzes the formation of acetyl phosphate from acetate and ATP. Can also catalyze the reverse reaction. The polypeptide is Acetate kinase (Clostridium acetobutylicum (strain ATCC 824 / DSM 792 / JCM 1419 / IAM 19013 / LMG 5710 / NBRC 13948 / NRRL B-527 / VKM B-1787 / 2291 / W)).